The following is a 466-amino-acid chain: Transcription factor SOX-10 (466 aa).

5 disordered regions span residues 1–67 (MAEE…DDDK), 160–198 (LRMQ…TDQG), 213–275 (DHRH…DFGN), 355–375 (QVKT…QPST), and 433–466 (RPLY…LSRP). Positions 23-32 (LSPSSAPSLG) are enriched in low complexity. At Ser-24 the chain carries Phosphoserine. Positions 62–102 (EADDDKFPVCIREAVSQVLSGYDWTLVPMPVRVNGASKSKP) are dimerization (DIM). A DNA-binding region (HMG box) is located at residues 104-172 (VKRPMNAFMV…QHKKDHPDYK (69 aa)). Basic and acidic residues-rich tracts occupy residues 160-173 (LRMQ…DYKY) and 254-271 (ADPK…KPHI). A transactivation domain (TAM) region spans residues 228–310 (PEHPSGQSHG…LPPNGHPGHV (83 aa)). A transactivation domain (TAC) region spans residues 353–466 (KAQVKTETTG…QPVYTTLSRP (114 aa)). Polar residues predominate over residues 440–466 (SDPSPSGPQSHSPTHWEQPVYTTLSRP).

As to quaternary structure, monomer. Interacts with Armcx3 at the mitochondrial outer membrane surface. Interacts with PAX3. In terms of tissue distribution, predominant expression in glial cells of the nervous system.

The protein resides in the cytoplasm. Its subcellular location is the nucleus. The protein localises to the mitochondrion outer membrane. In terms of biological role, transcription factor that plays a central role in developing and mature glia. Specifically activates expression of myelin genes, during oligodendrocyte (OL) maturation, such as DUSP15 and MYRF, thereby playing a central role in oligodendrocyte maturation and CNS myelination. Once induced, MYRF cooperates with SOX10 to implement the myelination program. Transcriptional activator of MITF, acting synergistically with PAX3. Transcriptional activator of MBP, via binding to the gene promoter. The sequence is that of Transcription factor SOX-10 (Sox10) from Rattus norvegicus (Rat).